The primary structure comprises 256 residues: Type III pantothenate kinase (256 aa).

6 to 13 provides a ligand contact to ATP; the sequence is DVGNTNIV. Substrate is bound at residue 107-110; sequence GADR. The active-site Proton acceptor is the D109. D129 is a binding site for K(+). An ATP-binding site is contributed by T132. A substrate-binding site is contributed by T184.

The protein belongs to the type III pantothenate kinase family. As to quaternary structure, homodimer. NH4(+) serves as cofactor. Requires K(+) as cofactor.

Its subcellular location is the cytoplasm. The catalysed reaction is (R)-pantothenate + ATP = (R)-4'-phosphopantothenate + ADP + H(+). It functions in the pathway cofactor biosynthesis; coenzyme A biosynthesis; CoA from (R)-pantothenate: step 1/5. Catalyzes the phosphorylation of pantothenate (Pan), the first step in CoA biosynthesis. This is Type III pantothenate kinase from Pelotomaculum thermopropionicum (strain DSM 13744 / JCM 10971 / SI).